The primary structure comprises 113 residues: Gigasin-5 (113 aa).

Component of the organic matrix of calcified shell layers.

The polypeptide is Gigasin-5 (Magallana gigas (Pacific oyster)).